Here is a 614-residue protein sequence, read N- to C-terminus: Zinc metalloproteinase-disintegrin-like HR1b (614 aa).

The N-terminal stretch at 1–20 (MIQVLLVTICLAVFPYQGSS) is a signal peptide. Positions 21–191 (IILESGNVND…KASKLVVTAE (171 aa)) are excised as a propeptide. Pyrrolidone carboxylic acid is present on Gln192. One can recognise a Peptidase M12B domain in the interval 198 to 394 (RYIKLAIVVD…HKPQCILNAP (197 aa)). Asn264 carries an N-linked (GlcNAc...) asparagine glycan. Intrachain disulfides connect Cys309–Cys389, Cys349–Cys373, and Cys351–Cys356. A Zn(2+)-binding site is contributed by His334. Glu335 is a catalytic residue. The Zn(2+) site is built by His338 and His344. An N-linked (GlcNAc...) asparagine glycan is attached at Asn372. Residues 395 to 398 (SKTD) constitute a propeptide that is removed on maturation. The Disintegrin domain maps to 402–488 (PPVCGNELLE…DCPTDRFHRN (87 aa)). Residues Val404, Asn407, Leu409, Glu411, Glu414, and Asp417 each coordinate Ca(2+). 22 disulfides stabilise this stretch: Cys405–Cys424, Cys405–Cys434, Cys416–Cys429, Cys416–Cys434, Cys418–Cys424, Cys428–Cys451, Cys442–Cys448, Cys447–Cys473, Cys460–Cys480, Cys467–Cys492, Cys467–Cys499, Cys492–Cys504, Cys499–Cys504, Cys511–Cys526, Cys511–Cys561, Cys526–Cys568, Cys539–Cys549, Cys549–Cys556, Cys556–Cys593, Cys561–Cys568, Cys587–Cys598, and Cys593–Cys598. Residues 466–468 (ECD) carry the D/ECD-tripeptide motif. Asn518 is a glycosylation site (N-linked (GlcNAc...) asparagine). N-linked (GlcNAc...) asparagine glycosylation is present at Asn571. A propeptide spanning residues 608–614 (TTVFSLI) is cleaved from the precursor.

The protein belongs to the venom metalloproteinase (M12B) family. P-III subfamily. P-IIIb sub-subfamily. Monomer. Requires Zn(2+) as cofactor. As to expression, expressed by the venom gland.

The protein resides in the secreted. Functionally, zinc protease that induces hemorrhage. Has preference for Tyr, Leu, Arg, Met, and Phe at the P1 position, in descending order (in vitro). Shows equal preference for the sequences of Ala-Asp and Arg-Ile at the P3-P2 position with different enzyme cleavage sites across the P1 position: the N-terminus side for Ala-Asp and the C-terminus side for Arg-Ile. Its function is as follows. Inhibits platelet aggregation induced by ADP, thrombin, platelet-activating factor and collagen. Acts by inhibiting fibrinogen interaction with platelet receptors alpha-IIb/beta-3 (ITGA2B/ITGB3). This chain is Zinc metalloproteinase-disintegrin-like HR1b, found in Protobothrops flavoviridis (Habu).